The primary structure comprises 655 residues: Very long-chain specific acyl-CoA dehydrogenase, mitochondrial (655 aa).

Residues 1-40 (MQAARMAASLGRQLLRLGGGSSRLTALLGQPRPGPARRPY) constitute a mitochondrion transit peptide. The interval 23–42 (RLTALLGQPRPGPARRPYAG) is disordered. Residues 41–482 (AGGAAQLALD…ALQGCMDKGK (442 aa)) are catalytic. Residue K51 is modified to N6-acetyllysine. K71 is modified (N6-acetyllysine; alternate). An N6-succinyllysine; alternate modification is found at K71. At K195 the chain carries N6-succinyllysine. FAD is bound at residue 214–223 (FCLTEPSSGS). C237 is modified (S-nitrosocysteine). Position 239 is an N6-acetyllysine; alternate (K239). N6-succinyllysine; alternate is present on K239. Residue 249–251 (WIS) participates in FAD binding. An N6-acetyllysine; alternate mark is found at K276 and K278. K276 and K278 each carry N6-succinyllysine; alternate. K298 is modified (N6-acetyllysine). K331 carries the N6-acetyllysine; alternate modification. The residue at position 331 (K331) is an N6-succinyllysine; alternate. N6-succinyllysine is present on K372. A substrate-binding site is contributed by 461-463 (FEG). E462 serves as the catalytic Proton acceptor. 464–466 (TND) provides a ligand contact to FAD. The residue at position 482 (K482) is an N6-acetyllysine; alternate. K482 is modified (N6-succinyllysine; alternate). Positions 483-516 (ELSGLGSALKNPFGNAGLLLGEAGKQLRRRAGLG) are membrane-anchoring. 2 positions are modified to phosphoserine: S517 and S522. K550 is modified (N6-acetyllysine). The residue at position 556 (K556) is an N6-acetyllysine; alternate. Residue K556 is modified to N6-succinyllysine; alternate. Q562 lines the FAD pocket. K639 carries the post-translational modification N6-succinyllysine.

It belongs to the acyl-CoA dehydrogenase family. Homodimer. Homodimerizes after import into the mitochondrion. It depends on FAD as a cofactor. Post-translationally, S-nitrosylation at Cys-237 in liver improves catalytic efficiency. As to expression, predominantly expressed in heart and skeletal muscle (at protein level). Also detected in kidney and liver (at protein level).

The protein localises to the mitochondrion inner membrane. It catalyses the reaction a very-long-chain 2,3-saturated fatty acyl-CoA + oxidized [electron-transfer flavoprotein] + H(+) = a very-long-chain (2E)-enoyl-CoA + reduced [electron-transfer flavoprotein]. The enzyme catalyses decanoyl-CoA + oxidized [electron-transfer flavoprotein] + H(+) = (2E)-decenoyl-CoA + reduced [electron-transfer flavoprotein]. It carries out the reaction dodecanoyl-CoA + oxidized [electron-transfer flavoprotein] + H(+) = (2E)-dodecenoyl-CoA + reduced [electron-transfer flavoprotein]. The catalysed reaction is tetradecanoyl-CoA + oxidized [electron-transfer flavoprotein] + H(+) = (2E)-tetradecenoyl-CoA + reduced [electron-transfer flavoprotein]. It catalyses the reaction oxidized [electron-transfer flavoprotein] + hexadecanoyl-CoA + H(+) = (2E)-hexadecenoyl-CoA + reduced [electron-transfer flavoprotein]. The enzyme catalyses octadecanoyl-CoA + oxidized [electron-transfer flavoprotein] + H(+) = (2E)-octadecenoyl-CoA + reduced [electron-transfer flavoprotein]. It carries out the reaction eicosanoyl-CoA + oxidized [electron-transfer flavoprotein] + H(+) = (2E)-eicosenoyl-CoA + reduced [electron-transfer flavoprotein]. The catalysed reaction is docosanoyl-CoA + oxidized [electron-transfer flavoprotein] + H(+) = (2E)-docosenoyl-CoA + reduced [electron-transfer flavoprotein]. It catalyses the reaction tetracosanoyl-CoA + oxidized [electron-transfer flavoprotein] + H(+) = (2E)-tetracosenoyl-CoA + reduced [electron-transfer flavoprotein]. The enzyme catalyses (9Z)-hexadecenoyl-CoA + oxidized [electron-transfer flavoprotein] + H(+) = (2E,9Z)-hexadecadienoyl-CoA + reduced [electron-transfer flavoprotein]. It carries out the reaction oxidized [electron-transfer flavoprotein] + (9Z)-octadecenoyl-CoA + H(+) = (2E,9Z)-octadecadienoyl-CoA + reduced [electron-transfer flavoprotein]. The protein operates within lipid metabolism; mitochondrial fatty acid beta-oxidation. Functionally, very long-chain specific acyl-CoA dehydrogenase is one of the acyl-CoA dehydrogenases that catalyze the first step of mitochondrial fatty acid beta-oxidation, an aerobic process breaking down fatty acids into acetyl-CoA and allowing the production of energy from fats. The first step of fatty acid beta-oxidation consists in the removal of one hydrogen from C-2 and C-3 of the straight-chain fatty acyl-CoA thioester, resulting in the formation of trans-2-enoyl-CoA. Among the different mitochondrial acyl-CoA dehydrogenases, very long-chain specific acyl-CoA dehydrogenase acts specifically on acyl-CoAs with saturated 12 to 24 carbons long primary chains. In Homo sapiens (Human), this protein is Very long-chain specific acyl-CoA dehydrogenase, mitochondrial.